The following is a 366-amino-acid chain: tRNA 2-selenouridine synthase (366 aa).

One can recognise a Rhodanese domain in the interval 12 to 135 (FLNDVPMMDA…MRTFLLDTLH (124 aa)). Residue cysteine 95 is the S-selanylcysteine intermediate of the active site.

Belongs to the SelU family. Monomer.

The enzyme catalyses 5-methylaminomethyl-2-thiouridine(34) in tRNA + selenophosphate + (2E)-geranyl diphosphate + H2O + H(+) = 5-methylaminomethyl-2-selenouridine(34) in tRNA + (2E)-thiogeraniol + phosphate + diphosphate. It catalyses the reaction 5-methylaminomethyl-2-thiouridine(34) in tRNA + (2E)-geranyl diphosphate = 5-methylaminomethyl-S-(2E)-geranyl-thiouridine(34) in tRNA + diphosphate. It carries out the reaction 5-methylaminomethyl-S-(2E)-geranyl-thiouridine(34) in tRNA + selenophosphate + H(+) = 5-methylaminomethyl-2-(Se-phospho)selenouridine(34) in tRNA + (2E)-thiogeraniol. The catalysed reaction is 5-methylaminomethyl-2-(Se-phospho)selenouridine(34) in tRNA + H2O = 5-methylaminomethyl-2-selenouridine(34) in tRNA + phosphate. In terms of biological role, involved in the post-transcriptional modification of the uridine at the wobble position (U34) of tRNA(Lys), tRNA(Glu) and tRNA(Gln). Catalyzes the conversion of 2-thiouridine (S2U-RNA) to 2-selenouridine (Se2U-RNA). Acts in a two-step process involving geranylation of 2-thiouridine (S2U) to S-geranyl-2-thiouridine (geS2U) and subsequent selenation of the latter derivative to 2-selenouridine (Se2U) in the tRNA chain. This chain is tRNA 2-selenouridine synthase, found in Pseudomonas syringae pv. syringae (strain B728a).